A 277-amino-acid chain; its full sequence is Pantothenate synthetase (277 aa).

M28–H35 contributes to the ATP binding site. H35 acts as the Proton donor in catalysis. Q59 is a binding site for (R)-pantoate. Residue Q59 coordinates beta-alanine. Residues G145–D148, V174, and L182–R185 contribute to the ATP site.

It belongs to the pantothenate synthetase family. As to quaternary structure, homodimer.

It is found in the cytoplasm. It catalyses the reaction (R)-pantoate + beta-alanine + ATP = (R)-pantothenate + AMP + diphosphate + H(+). Its pathway is cofactor biosynthesis; (R)-pantothenate biosynthesis; (R)-pantothenate from (R)-pantoate and beta-alanine: step 1/1. Its function is as follows. Catalyzes the condensation of pantoate with beta-alanine in an ATP-dependent reaction via a pantoyl-adenylate intermediate. This Anaplasma marginale (strain St. Maries) protein is Pantothenate synthetase.